A 390-amino-acid chain; its full sequence is Exodeoxyribonuclease 7 large subunit (390 aa).

It belongs to the XseA family. Heterooligomer composed of large and small subunits.

It is found in the cytoplasm. The enzyme catalyses Exonucleolytic cleavage in either 5'- to 3'- or 3'- to 5'-direction to yield nucleoside 5'-phosphates.. Functionally, bidirectionally degrades single-stranded DNA into large acid-insoluble oligonucleotides, which are then degraded further into small acid-soluble oligonucleotides. In Synechococcus sp. (strain CC9311), this protein is Exodeoxyribonuclease 7 large subunit.